Reading from the N-terminus, the 215-residue chain is MPFHPVTAALMYRGIYTVPNLLSEQRPVDIPEDELEEIREAFKVFDRDGNGFISKQELGTAMRSLGYMPNEVELEVIIQRLDMDGDGQVDFEEFVTLLGPKLSTSGIPEKFHGTDFDTVFWKCDMQKLTVDELKRLLYDTFCEHLSMKDIENIIMTEEESHLGTAEECPVDVETCSNQQIRQTCVRKSLICAFAIAFIISVMLIAANQVLRSGMK.

Residues 1 to 188 lie on the Cytoplasmic side of the membrane; that stretch reads MPFHPVTAAL…QIRQTCVRKS (188 aa). EF-hand domains are found at residues 33–68 and 69–104; these read DELE…LGYM and PNEV…KLST. Positions 46, 48, 50, 57, 82, 84, 86, 88, and 93 each coordinate Ca(2+). Residues 189–209 form a helical; Anchor for type IV membrane protein membrane-spanning segment; sequence LICAFAIAFIISVMLIAANQV. The Extracellular portion of the chain corresponds to 210 to 215; it reads LRSGMK.

In terms of assembly, interacts with PI4KB. This binding competes with FREQ/NCS1 binding in a calcium-dependent manner.

The protein localises to the golgi apparatus. It is found in the trans-Golgi network membrane. Its subcellular location is the cytoplasm. The protein resides in the perinuclear region. It localises to the cell membrane. In terms of biological role, negatively regulates Golgi-to-plasma membrane trafficking by interacting with PI4KB and inhibiting its activity. The chain is Calcium-binding protein 7 (CABP7) from Homo sapiens (Human).